A 501-amino-acid chain; its full sequence is Aspartate--tRNA ligase, cytoplasmic (501 aa).

Thr-52 is subject to Phosphothreonine. At Lys-74 the chain carries N6-acetyllysine. Residue Glu-229 participates in L-aspartate binding. Phosphoserine is present on Ser-249. Residues 251–254 form an aspartate region; that stretch reads QLYK. Position 273 (Arg-273) interacts with L-aspartate. ATP-binding positions include 273–275 and 281–283; these read RAE and RHL. Residue Lys-374 is modified to N6-acetyllysine. Glu-424 is an ATP binding site. Positions 427 and 431 each coordinate L-aspartate. 472–475 contributes to the ATP binding site; sequence GLER.

Belongs to the class-II aminoacyl-tRNA synthetase family. Type 2 subfamily. Homodimer. Part of a multisubunit complex that groups tRNA ligases for Arg (RARS1), Asp (DARS1), Gln (QARS1), Ile (IARS1), Leu (LARS1), Lys (KARS1), Met (MARS1) the bifunctional ligase for Glu and Pro (EPRS1) and the auxiliary subunits AIMP1/p43, AIMP2/p38 and EEF1E1/p18.

The protein resides in the cytoplasm. It carries out the reaction tRNA(Asp) + L-aspartate + ATP = L-aspartyl-tRNA(Asp) + AMP + diphosphate. Functionally, catalyzes the specific attachment of an amino acid to its cognate tRNA in a 2 step reaction: the amino acid (AA) is first activated by ATP to form AA-AMP and then transferred to the acceptor end of the tRNA. The polypeptide is Aspartate--tRNA ligase, cytoplasmic (Dars1) (Rattus norvegicus (Rat)).